The primary structure comprises 295 residues: Bifunctional protein FolD (295 aa).

NADP(+) is bound by residues 172–174 (GRS), Ser-197, and Ile-238.

The protein belongs to the tetrahydrofolate dehydrogenase/cyclohydrolase family. Homodimer.

The catalysed reaction is (6R)-5,10-methylene-5,6,7,8-tetrahydrofolate + NADP(+) = (6R)-5,10-methenyltetrahydrofolate + NADPH. The enzyme catalyses (6R)-5,10-methenyltetrahydrofolate + H2O = (6R)-10-formyltetrahydrofolate + H(+). The protein operates within one-carbon metabolism; tetrahydrofolate interconversion. Functionally, catalyzes the oxidation of 5,10-methylenetetrahydrofolate to 5,10-methenyltetrahydrofolate and then the hydrolysis of 5,10-methenyltetrahydrofolate to 10-formyltetrahydrofolate. The sequence is that of Bifunctional protein FolD from Rickettsia akari (strain Hartford).